The following is a 659-amino-acid chain: Threonine--tRNA ligase (659 aa).

Residues 1–60 (MTVYLPDGKPLELPEGATAKDVARALGEGWERRAVGAIVDGELYDLLKPLPQGAKVRLLT) form the TGS domain. A catalytic region spans residues 252–552 (DHRRLGRELE…LIEHFAGDFP (301 aa)). Zn(2+) contacts are provided by Cys-349, His-400, and His-529.

It belongs to the class-II aminoacyl-tRNA synthetase family. Homodimer. Requires Zn(2+) as cofactor.

It is found in the cytoplasm. It catalyses the reaction tRNA(Thr) + L-threonine + ATP = L-threonyl-tRNA(Thr) + AMP + diphosphate + H(+). Catalyzes the attachment of threonine to tRNA(Thr) in a two-step reaction: L-threonine is first activated by ATP to form Thr-AMP and then transferred to the acceptor end of tRNA(Thr). Also edits incorrectly charged L-seryl-tRNA(Thr). The polypeptide is Threonine--tRNA ligase (Thermus thermophilus (strain ATCC BAA-163 / DSM 7039 / HB27)).